The following is a 691-amino-acid chain: Elongation factor G (691 aa).

The region spanning 8 to 282 is the tr-type G domain; the sequence is ERVRNIGIAA…AVVDYLPAPI (275 aa). Residues 17 to 24, 81 to 85, and 135 to 138 contribute to the GTP site; these read AHIDAGKT, DTPGH, and NKMD.

The protein belongs to the TRAFAC class translation factor GTPase superfamily. Classic translation factor GTPase family. EF-G/EF-2 subfamily.

The protein localises to the cytoplasm. In terms of biological role, catalyzes the GTP-dependent ribosomal translocation step during translation elongation. During this step, the ribosome changes from the pre-translocational (PRE) to the post-translocational (POST) state as the newly formed A-site-bound peptidyl-tRNA and P-site-bound deacylated tRNA move to the P and E sites, respectively. Catalyzes the coordinated movement of the two tRNA molecules, the mRNA and conformational changes in the ribosome. The protein is Elongation factor G of Synechococcus sp. (strain CC9311).